The chain runs to 211 residues: 5-formyltetrahydrofolate cyclo-ligase (211 aa).

Residue 4–8 (KQLLR) participates in ATP binding. Substrate is bound by residues E56 and 152–156 (HGAGY). ATP-binding positions include 151 to 158 (GHGAGYYD) and D194.

This sequence belongs to the 5-formyltetrahydrofolate cyclo-ligase family. In terms of processing, N-glycosylated.

It localises to the mitochondrion. The catalysed reaction is (6S)-5-formyl-5,6,7,8-tetrahydrofolate + ATP = (6R)-5,10-methenyltetrahydrofolate + ADP + phosphate. Only enzyme known to utilize 5-formyltetrahydrofolate (folinic acid) as substrate. Contributes to tetrahydrofolate metabolism in an alternative way of folate biosynthesis. May regulate carbon flow through the folate-dependent one-carbon metabolic network that supplies carbon for the biosynthesis of purines, thymidine and amino acids. In Saccharomyces cerevisiae (strain ATCC 204508 / S288c) (Baker's yeast), this protein is 5-formyltetrahydrofolate cyclo-ligase (FAU1).